The following is a 297-amino-acid chain: Tyrosine recombinase XerD (297 aa).

The Core-binding (CB) domain maps to 1–86; that stretch reads MKNLALIDLF…AMRKLFQYLY (86 aa). Positions 107-291 constitute a Tyr recombinase domain; that stretch reads RLPKYLTEQQ…AKERLKRLHE (185 aa). Catalysis depends on residues arginine 147, lysine 171, histidine 243, arginine 246, and histidine 269. The O-(3'-phospho-DNA)-tyrosine intermediate role is filled by tyrosine 278.

It belongs to the 'phage' integrase family. XerD subfamily. As to quaternary structure, forms a cyclic heterotetrameric complex composed of two molecules of XerC and two molecules of XerD.

The protein localises to the cytoplasm. In terms of biological role, site-specific tyrosine recombinase, which acts by catalyzing the cutting and rejoining of the recombining DNA molecules. The XerC-XerD complex is essential to convert dimers of the bacterial chromosome into monomers to permit their segregation at cell division. It also contributes to the segregational stability of plasmids. The polypeptide is Tyrosine recombinase XerD (Haemophilus influenzae (strain ATCC 51907 / DSM 11121 / KW20 / Rd)).